Here is a 218-residue protein sequence, read N- to C-terminus: MNTVLSPIEARIIGCLIEKEVTTPDHYPLTLNSLTTACNQKSNREPVLSLSESDVLDAVDGLIGRRMVSDESSFNSRVNKYQHRFCNTEFGDLQFTEQERAIICCMLLRGAQTPGELRTRTGRLANFSDVKEVESILEKLVAREAGALVVKLPREAGKRESRYQHLLSGEVDIEAFATASVSAVSSSASSEKFEELESEVASLREEVAELKALVESLL.

Belongs to the UPF0502 family.

In Vibrio atlanticus (strain LGP32) (Vibrio splendidus (strain Mel32)), this protein is UPF0502 protein VS_II0353.